Here is a 304-residue protein sequence, read N- to C-terminus: Probable WRKY transcription factor 13 (304 aa).

Positions 141-190 (QKNNHGSEIDVDDNDDEVGDGGGINDDDNGRHHHHDTPSRHDKHNTASLG) are disordered. Residues 149-159 (IDVDDNDDEVG) show a composition bias toward acidic residues. The segment at residues 217–282 (SEVDVLDDGY…YEGRHLHSPS (66 aa)) is a DNA-binding region (WRKY).

Belongs to the WRKY group II-c family.

It localises to the nucleus. Its function is as follows. Transcription factor. Interacts specifically with the W box (5'-(T)TGAC[CT]-3'), a frequently occurring elicitor-responsive cis-acting element. This Arabidopsis thaliana (Mouse-ear cress) protein is Probable WRKY transcription factor 13 (WRKY13).